Here is a 196-residue protein sequence, read N- to C-terminus: Ribonuclease HII (196 aa).

The RNase H type-2 domain maps to 9-196 (NLIAGVDEVG…APVKRALNLV (188 aa)). The a divalent metal cation site is built by Asp15, Glu16, and Asp107.

The protein belongs to the RNase HII family. The cofactor is Mn(2+). Mg(2+) serves as cofactor.

The protein localises to the cytoplasm. The enzyme catalyses Endonucleolytic cleavage to 5'-phosphomonoester.. Its function is as follows. Endonuclease that specifically degrades the RNA of RNA-DNA hybrids. This Proteus mirabilis (strain HI4320) protein is Ribonuclease HII.